Here is a 168-residue protein sequence, read N- to C-terminus: Nicotinamide-nucleotide adenylyltransferase (168 aa).

Positions 8, 9, 13, 16, 119, 121, 124, 126, 127, and 130 each coordinate ATP.

Belongs to the archaeal NMN adenylyltransferase family. As to quaternary structure, homohexamer existing as a trimer of dimers.

It localises to the cytoplasm. It catalyses the reaction beta-nicotinamide D-ribonucleotide + ATP + H(+) = diphosphate + NAD(+). The protein operates within cofactor biosynthesis; NAD(+) biosynthesis; NAD(+) from nicotinamide D-ribonucleotide: step 1/1. Catalyzes the formation of NAD(+) from nicotinamide mononucleotide (NMN) and ATP. The chain is Nicotinamide-nucleotide adenylyltransferase from Methanocaldococcus jannaschii (strain ATCC 43067 / DSM 2661 / JAL-1 / JCM 10045 / NBRC 100440) (Methanococcus jannaschii).